Consider the following 947-residue polypeptide: Beta-glucosidase (947 aa).

Asp696 is a catalytic residue.

The protein belongs to the glycosyl hydrolase 3 family.

The enzyme catalyses Hydrolysis of terminal, non-reducing beta-D-glucosyl residues with release of beta-D-glucose.. Its pathway is glycan metabolism; cellulose degradation. The polypeptide is Beta-glucosidase (Ruminococcus albus).